We begin with the raw amino-acid sequence, 855 residues long: Suppressor of tumorigenicity 14 protein homolog (855 aa).

Residues 1–21 (MKSERARRGAGGSGDLGAGFK) are disordered. Residues 1–55 (MKSERARRGAGGSGDLGAGFKYTSRPENMNGCEEGVEFLPANNSSKVEKGGPRRW) are Cytoplasmic-facing. S13 is modified (phosphoserine). The helical; Signal-anchor for type II membrane protein transmembrane segment at 56–76 (VVLMAVLAAFLALSLLAGLLA) threads the bilayer. Over 77 to 855 (WHFQDRNVRV…RDWIKAQIGV (779 aa)) the chain is Extracellular. The SEA domain occupies 86–203 (VQKIFNGYLS…TSVVAFPSDP (118 aa)). Residue N109 is glycosylated (N-linked (GlcNAc...) asparagine). A disulfide bridge links C214 with C244. CUB domains follow at residues 214–334 (CSFA…FFQL) and 340–447 (CGGY…FLSF). 2 N-linked (GlcNAc...) asparagine glycosylation sites follow: N302 and N365. Disulfide bonds link C340–C366, C397–C410, C453–C464, C459–C477, C471–C486, C488–C501, C496–C514, C508–C523, C525–C537, C532–C550, C544–C559, C567–C579, C574–C593, C587–C602, and C641–C657. 4 consecutive LDL-receptor class A domains span residues 452–487 (PCPG…LDCK), 487–524 (KCNA…EGCS), 524–560 (SCPP…AKCQ), and 566–603 (PCTE…KDCD). N-linked (GlcNAc...) asparagine glycosylation is present at N489. The Peptidase S1 domain occupies 615-854 (VVGGENSDQG…FRDWIKAQIG (240 aa)). Residues H656 and D711 each act as charge relay system in the active site. N-linked (GlcNAc...) asparagine glycosylation is present at N772. 2 cysteine pairs are disulfide-bonded: C776/C790 and C801/C830. The active-site Charge relay system is S805.

Belongs to the peptidase S1 family. Interacts with CDCP1. May interact with TMEFF1.

The protein resides in the membrane. It carries out the reaction Cleaves various synthetic substrates with Arg or Lys at the P1 position and prefers small side-chain amino acids, such as Ala and Gly, at the P2 position.. In terms of biological role, exhibits trypsin-like activity as defined by cleavage of synthetic substrates with Arg or Lys as the P1 site. Involved in the terminal differentiation of keratinocytes through prostasin (PRSS8) activation and filaggrin (FLG) processing. Proteolytically cleaves and therefore activates TMPRSS13. The polypeptide is Suppressor of tumorigenicity 14 protein homolog (ST14) (Bos taurus (Bovine)).